The sequence spans 515 residues: MTKRVLISVSDKAGIVEFAQELKKLGWEIISTGGTKVALDNAGVDTIAIDDVTGFPEMMDGRVKTLHPNIHGGLLARRDLDSHLEAVKDNKIELIDLVVVNLYPFKETILKPDVTYADAVENIDIGGPSMLRSAAKNHASVTVVVDPADYAVVLDELAANGETSYETRQRLAAKVFRHTAAYDALIAEYFTAQVGESKPEKLTLTYDLKQPMRYGENPQQDADFYQKALPTDYSIASAKQLNGKELSFNNIRDADAAIRIIRDFKDSPTVVALKHMNPCGIGQADDIETAWDYAYESDPVSIFGGIVVLNREVDAATAEKMHGVFLEIIIAPSYTDEALAILINKKKNLRILALPFNAQEASEVEAEYTGVVGGLLVQNQDVVKESPADWQVVTKRQPTETEATALEFAWKAIKYVKSNGIIVTNDHMTLGVGPGQTNRVASVRLAIDQAKDRLNGAVLASDAFFPFADNVEEIAKAGIKAIIQPGGSVRDQESIEAADKYGLTMVFTGVRHFRH.

The 145-residue stretch at 1–145 folds into the MGS-like domain; it reads MTKRVLISVS…KNHASVTVVV (145 aa).

It belongs to the PurH family.

The enzyme catalyses (6R)-10-formyltetrahydrofolate + 5-amino-1-(5-phospho-beta-D-ribosyl)imidazole-4-carboxamide = 5-formamido-1-(5-phospho-D-ribosyl)imidazole-4-carboxamide + (6S)-5,6,7,8-tetrahydrofolate. The catalysed reaction is IMP + H2O = 5-formamido-1-(5-phospho-D-ribosyl)imidazole-4-carboxamide. The protein operates within purine metabolism; IMP biosynthesis via de novo pathway; 5-formamido-1-(5-phospho-D-ribosyl)imidazole-4-carboxamide from 5-amino-1-(5-phospho-D-ribosyl)imidazole-4-carboxamide (10-formyl THF route): step 1/1. It functions in the pathway purine metabolism; IMP biosynthesis via de novo pathway; IMP from 5-formamido-1-(5-phospho-D-ribosyl)imidazole-4-carboxamide: step 1/1. The protein is Bifunctional purine biosynthesis protein PurH of Streptococcus pneumoniae (strain 70585).